Here is a 117-residue protein sequence, read N- to C-terminus: Large ribosomal subunit protein bL19 (117 aa).

This sequence belongs to the bacterial ribosomal protein bL19 family.

In terms of biological role, this protein is located at the 30S-50S ribosomal subunit interface and may play a role in the structure and function of the aminoacyl-tRNA binding site. This chain is Large ribosomal subunit protein bL19, found in Vesicomyosocius okutanii subsp. Calyptogena okutanii (strain HA).